The sequence spans 363 residues: Pyrimidine monooxygenase RutA (363 aa).

FMN is bound by residues I49–K50, N115, E124, R140–Y141, and S190.

This sequence belongs to the NtaA/SnaA/DszA monooxygenase family. RutA subfamily.

The catalysed reaction is uracil + FMNH2 + NADH + O2 = (Z)-3-ureidoacrylate + FMN + NAD(+) + H2O + H(+). It carries out the reaction thymine + FMNH2 + NADH + O2 = (Z)-2-methylureidoacrylate + FMN + NAD(+) + H2O + H(+). Functionally, catalyzes the pyrimidine ring opening between N-3 and C-4 by an unusual flavin hydroperoxide-catalyzed mechanism, adding oxygen atoms in the process to yield ureidoacrylate peracid, that immediately reacts with FMN forming ureidoacrylate and FMN-N(5)-oxide. The FMN-N(5)-oxide reacts spontaneously with NADH to produce FMN. Requires the flavin reductase RutF to regenerate FMN in vivo. The sequence is that of Pyrimidine monooxygenase RutA from Escherichia coli (strain SMS-3-5 / SECEC).